Consider the following 398-residue polypeptide: MAKEKYDRSKPHVNIGTIGHVDHGKTTLTAAITTVLARRLPTSVNQPKDYASIDAAPEERERGITINTAHVEYETEKRHYAHIDAPGHADYVKNMITGAAQMDGAILVVASTDGPMPQTREHILLSRQVGVKHLIVFMNKVDLVDDEELLELVEMEIRDLLSEYDFPGDDLPVIQGSALKALEGDEKYEDIIMELMSTVDEYIPEPERDTDKPLLLPVEDVFSITGRGTVASGRIDRGTVRVNDEVEIVGIKEDIQKAVVTGVEMFRKQLDEGLAGDNVGVLLRGVQRDEIERGQVLAKPGSINPHTKFKGEVYILSKEEGGRHTPFFNNYRPQFYFRTTDVTGSIELPAGTEMVMPGDNVTIEVELIHPIAVEQGTTFSIREGGRTVGSGIVSEIEA.

Positions 10-207 (KPHVNIGTIG…TVDEYIPEPE (198 aa)) constitute a tr-type G domain. The segment at 19–26 (GHVDHGKT) is G1. 19–26 (GHVDHGKT) contributes to the GTP binding site. T26 is a binding site for Mg(2+). Positions 63-67 (GITIN) are G2. The interval 84–87 (DAPG) is G3. GTP contacts are provided by residues 84 to 88 (DAPGH) and 139 to 142 (NKVD). The interval 139–142 (NKVD) is G4. The tract at residues 177–179 (SAL) is G5.

This sequence belongs to the TRAFAC class translation factor GTPase superfamily. Classic translation factor GTPase family. EF-Tu/EF-1A subfamily. As to quaternary structure, monomer.

The protein localises to the cytoplasm. The catalysed reaction is GTP + H2O = GDP + phosphate + H(+). Its function is as follows. GTP hydrolase that promotes the GTP-dependent binding of aminoacyl-tRNA to the A-site of ribosomes during protein biosynthesis. The polypeptide is Elongation factor Tu (Streptococcus agalactiae serotype Ia (strain ATCC 27591 / A909 / CDC SS700)).